Reading from the N-terminus, the 430-residue chain is Serine hydroxymethyltransferase (430 aa).

(6S)-5,6,7,8-tetrahydrofolate is bound at residue 120–122 (GHI). K226 bears the N6-(pyridoxal phosphate)lysine mark.

Belongs to the SHMT family. In terms of assembly, homodimer. It depends on pyridoxal 5'-phosphate as a cofactor.

The protein resides in the cytoplasm. It participates in amino-acid biosynthesis; glycine biosynthesis; glycine from L-serine: step 1/1. Its function is as follows. Catalyzes the reversible interconversion of serine and glycine with a modified folate serving as the one-carbon carrier. Also exhibits a pteridine-independent aldolase activity toward beta-hydroxyamino acids, producing glycine and aldehydes, via a retro-aldol mechanism. This is Serine hydroxymethyltransferase from Pyrobaculum aerophilum (strain ATCC 51768 / DSM 7523 / JCM 9630 / CIP 104966 / NBRC 100827 / IM2).